A 483-amino-acid chain; its full sequence is Phloretin 2'-O-glucosyltransferase (483 aa).

His-15 functions as the Proton acceptor in the catalytic mechanism. Position 15 (His-15) interacts with an anthocyanidin. The Charge relay role is filled by Asp-118. Thr-140, Ala-360, Gln-362, His-377, Trp-380, Asn-381, Ser-382, and Glu-385 together coordinate UDP-alpha-D-glucose. Ala-400 serves as a coordination point for an anthocyanidin. Positions 401 and 402 each coordinate UDP-alpha-D-glucose.

It belongs to the UDP-glycosyltransferase family. As to expression, highly expressed in roots and at lower levels in leaves, flowers and fruits.

The enzyme catalyses phloretin + UDP-alpha-D-glucose = phlorizin + UDP + H(+). Functionally, glycosyltransferase that possesses phloretin 2'-O-glycosyltransferase activity. Converts phloretin to phlorizin (phloretin 2'-O-glucoside), a potent antioxidant. Is specific for phloretin and does not possess glycosyltransferase activity toward caffeic acid, catechin, chlorogenic acid, 2-coumaric acid, 3-coumaric acid, 4-coumaric acid, cyanidin, 3,4-dihydroxyhydrocinnamic acid, epicatechin, 3-hydroxybenzoic acid, naringenin, 3,4-dihydroxybenzoic acid, quercetin and rutin. Can glycosylate phloretin in the presence of UDP-glucose, UDP-xylose and UDP-galactose. The protein is Phloretin 2'-O-glucosyltransferase of Malus domestica (Apple).